Here is a 68-residue protein sequence, read N- to C-terminus: uncharacterized protein (68 aa).

This is an uncharacterized protein from Bacillus subtilis (strain 168).